The chain runs to 93 residues: Putative regulatory protein Fnod_1678 (93 aa).

The protein belongs to the RemA family.

In Fervidobacterium nodosum (strain ATCC 35602 / DSM 5306 / Rt17-B1), this protein is Putative regulatory protein Fnod_1678.